The following is a 257-amino-acid chain: Aspartate/glutamate leucyltransferase (257 aa).

Belongs to the R-transferase family. Bpt subfamily.

The protein resides in the cytoplasm. The catalysed reaction is N-terminal L-glutamyl-[protein] + L-leucyl-tRNA(Leu) = N-terminal L-leucyl-L-glutamyl-[protein] + tRNA(Leu) + H(+). It carries out the reaction N-terminal L-aspartyl-[protein] + L-leucyl-tRNA(Leu) = N-terminal L-leucyl-L-aspartyl-[protein] + tRNA(Leu) + H(+). In terms of biological role, functions in the N-end rule pathway of protein degradation where it conjugates Leu from its aminoacyl-tRNA to the N-termini of proteins containing an N-terminal aspartate or glutamate. This chain is Aspartate/glutamate leucyltransferase, found in Phenylobacterium zucineum (strain HLK1).